The sequence spans 1481 residues: Cystic fibrosis transmembrane conductance regulator (1481 aa).

The Cytoplasmic segment spans residues 1 to 77 (MQRSPLEKAS…KLINALRRCF (77 aa)). Residues 78–98 (FWRFMFYGIILYLGEVTKAVQ) form a helical membrane-spanning segment. In terms of domain architecture, ABC transmembrane type-1 1 spans 81-365 (FMFYGIILYL…WAVQTWYDSL (285 aa)). At 99-122 (PLLLGRIIASYDPDNKAERSIAIY) the chain is on the extracellular side. A helical transmembrane segment spans residues 123-146 (LGIGLCLLFIVRTLLLHPAIFGLH). Over 147–195 (HIGMQMRIAMFSLIYKKTLKLSSRVLDKISIGQLVSLLSNNLNKFDEGL) the chain is Cytoplasmic. Residues 196–216 (ALAHFVWIAPLQVTLLMGLLW) traverse the membrane as a helical segment. The Extracellular portion of the chain corresponds to 217-222 (ELLQAF). A helical membrane pass occupies residues 223–243 (TFCGLAFLVVLAFLQAGLGKM). The Cytoplasmic portion of the chain corresponds to 244-298 (MMKYRDQRAGKINERLVITSEIIENIQSVKAYCWEEAMEKIIENLRQTELKLTRK). The helical transmembrane segment at 299-319 (AAYVRYLNSSAFFFSGFFVVF) threads the bilayer. At 320-339 (LSVLPYALLKGIILRKIFTT) the chain is on the extracellular side. A helical membrane pass occupies residues 340-358 (ISFCIVLRMAVTRQFPWAV). Topologically, residues 359–858 (QTWYDSLGAI…YLRYITVHKS (500 aa)) are cytoplasmic. ATP contacts are provided by residues W401, 457–464 (GSTGAGKT), and Q492. The region spanning 423-645 (NGDNNLFFSN…RPDFSSKLMG (223 aa)) is the ABC transporter 1 domain. Residue C523 is the site of S-palmitoyl cysteine attachment. Phosphoserine occurs at positions 548 and 659. Residues 653-831 (TAERRNSIIT…EEINEEDLRD (179 aa)) are disordered R region. S669 carries the phosphoserine; by PKA modification. S685 carries the post-translational modification Phosphoserine. A Glycyl lysine isopeptide (Lys-Gly) (interchain with G-Cter in ubiquitin) cross-link involves residue K687. A phosphoserine mark is found at S699 and S711. Residue T716 is modified to Phosphothreonine. 5 positions are modified to phosphoserine: S736, S767, S790, S795, and S813. Residues 859 to 879 (LMFVLIWCLVVFLAEVAASLV) form a helical membrane-spanning segment. Residues 859 to 1155 (LMFVLIWCLV…AVNSSIDVDS (297 aa)) form the ABC transmembrane type-1 2 domain. At 880 to 918 (VLCLFPKILFQDKGNSTKSANNSYAVIITSTSSYYIFYI) the chain is on the extracellular side. Residues N894 and N900 are each glycosylated (N-linked (GlcNAc...) asparagine). The chain crosses the membrane as a discontinuously helical span at residues 919 to 939 (YVGVADTLLALGLFRGLPLVH). At 940–990 (TLITVSKTLHHKMLQSVLQAPMSTLNTLKTGGILNRFSKDIAVLDDLLPLT) the chain is on the cytoplasmic side. A helical membrane pass occupies residues 991–1011 (IFDFVQLLLIVIGAVVVVSVL). Topologically, residues 1012 to 1013 (QP) are extracellular. Residues 1014 to 1034 (YIFLATVPVIAAFILLRAYFL) traverse the membrane as a helical segment. The Cytoplasmic portion of the chain corresponds to 1035-1095 (HTSQQLKQLE…TANWFLYLST (61 aa)). Residues 1096-1116 (LRWFQMRIEMIFVIFFIAVTF) form a helical membrane-spanning segment. Residues 1117–1130 (ISILTTGEGEGRVG) are Extracellular-facing. A helical transmembrane segment spans residues 1131–1151 (IILTLAMNIMGTLQWAVNSSI). Topologically, residues 1152–1481 (DVDSLMRSVS…TEEEVQETKI (330 aa)) are cytoplasmic. One can recognise an ABC transporter 2 domain in the interval 1211-1444 (MTVKDLTAKY…KSLFRQAISP (234 aa)). ATP is bound by residues Y1220 and 1245–1252 (GRTGSGKS). Residues 1387–1481 (RTLKQAFADC…TEEEVQETKI (95 aa)) are interaction with GORASP2. C1396 is lipidated: S-palmitoyl cysteine. Residues 1452 to 1481 (PQRNSSRQKSRSNIAALKEETEEEVQETKI) are disordered. Over residues 1453-1464 (QRNSSRQKSRSN) the composition is skewed to low complexity. At S1457 the chain carries Phosphoserine. Over residues 1471–1481 (ETEEEVQETKI) the composition is skewed to acidic residues. The short motif at 1479–1481 (TKI) is the PDZ-binding element.

Belongs to the ABC transporter superfamily. ABCC family. CFTR transporter (TC 3.A.1.202) subfamily. Monomer; does not require oligomerization for channel activity. May form oligomers in the membrane. Interacts with SLC26A3, SLC26A6 and NHERF1. Interacts with SHANK2. Interacts with MYO6. Interacts (via C-terminus) with GOPC (via PDZ domain); this promotes CFTR internalization and thereby decreases channel activity. Interacts with SLC4A7 through NHERF1. Found in a complex with MYO5B and RAB11A. Interacts with ANO1. Interacts with SLC26A8. Interacts with AHCYL1; the interaction increases CFTR activity. Interacts with CSE1L. The core-glycosylated form interacts with GORASP2 (via PDZ GRASP-type 1 domain) in respone to ER stress. Interacts with MARCHF2; the interaction leads to CFTR ubiqtuitination and degradation. Interacts with ADGRG2. Post-translationally, N-glycosylated. Phosphorylated; cAMP treatment promotes phosphorylation and activates the channel. Dephosphorylation decreases the ATPase activity (in vitro). Phosphorylation at PKA sites activates the channel. Phosphorylation at PKC sites enhances the response to phosphorylation by PKA. Phosphorylated by AMPK; this inhibits channel activity. In terms of processing, ubiquitinated, leading to its degradation in the lysosome. Deubiquitination by USP10 in early endosomes enhances its endocytic recycling to the cell membrane. Ubiquitinated by RNF185 during ER stress. Ubiquitinated by MARCHF2.

It is found in the apical cell membrane. The protein resides in the early endosome membrane. The protein localises to the cell membrane. Its subcellular location is the recycling endosome membrane. It localises to the endoplasmic reticulum membrane. It is found in the nucleus. The enzyme catalyses ATP + H2O + closed Cl(-) channel = ADP + phosphate + open Cl(-) channel.. It catalyses the reaction chloride(in) = chloride(out). It carries out the reaction hydrogencarbonate(in) = hydrogencarbonate(out). The catalysed reaction is ATP + H2O = ADP + phosphate + H(+). In terms of biological role, epithelial ion channel that plays an important role in the regulation of epithelial ion and water transport and fluid homeostasis. Mediates the transport of chloride ions across the cell membrane. Possesses an intrinsic ATPase activity and utilizes ATP to gate its channel; the passive flow of anions through the channel is gated by cycles of ATP binding and hydrolysis by the ATP-binding domains. The ion channel is also permeable to HCO(3)(-); selectivity depends on the extracellular chloride concentration. Exerts its function also by modulating the activity of other ion channels and transporters. Contributes to the regulation of the pH and the ion content of the epithelial fluid layer. Modulates the activity of the epithelial sodium channel (ENaC) complex, in part by regulating the cell surface expression of the ENaC complex. May regulate bicarbonate secretion and salvage in epithelial cells by regulating the transporter SLC4A7. Can inhibit the chloride channel activity of ANO1. Plays a role in the chloride and bicarbonate homeostasis during sperm epididymal maturation and capacitation. The protein is Cystic fibrosis transmembrane conductance regulator of Muntiacus reevesi (Reeves' muntjac).